The following is a 145-amino-acid chain: Deoxyuridine 5'-triphosphate nucleotidohydrolase (145 aa).

Substrate-binding positions include 65–67 (RSG), Asn78, and 82–84 (TID).

Belongs to the dUTPase family. Requires Mg(2+) as cofactor.

It carries out the reaction dUTP + H2O = dUMP + diphosphate + H(+). It participates in pyrimidine metabolism; dUMP biosynthesis; dUMP from dCTP (dUTP route): step 2/2. Its function is as follows. This enzyme is involved in nucleotide metabolism: it produces dUMP, the immediate precursor of thymidine nucleotides and it decreases the intracellular concentration of dUTP so that uracil cannot be incorporated into DNA. This is Deoxyuridine 5'-triphosphate nucleotidohydrolase from Clostridium tetani (strain Massachusetts / E88).